The chain runs to 106 residues: uncharacterized protein (106 aa).

The protein localises to the mitochondrion. This is an uncharacterized protein from Claviceps purpurea (Ergot fungus).